We begin with the raw amino-acid sequence, 628 residues long: Basal cell adhesion molecule (628 aa).

A signal peptide spans 1-31; that stretch reads MEPPDARAGARRAPRLLVLALLLAAPPGSKA. 2 consecutive Ig-like V-type domains span residues 32–142 and 150–253; these read EVRL…ARLK and PEVS…RLDG. Residues 32–547 lie on the Extracellular side of the membrane; it reads EVRLSVPPLV…GTVAPQTSQA (516 aa). Disulfide bonds link C53–C125, C172–C237, and C291–C337. 3 Ig-like C2-type domains span residues 254 to 355, 355 to 441, and 448 to 538; these read PSFS…KTLE, ELRV…RSFR, and PELK…FHFG. Residues N321, N330, and N378 are each glycosylated (N-linked (GlcNAc...) asparagine). Cystine bridges form between C384/C424 and C473/C522. The chain crosses the membrane as a helical span at residues 548–568; sequence GVAVMAVAISVALLLLVVAVF. Residues 569 to 628 lie on the Cytoplasmic side of the membrane; that stretch reads YCMRRKGRPGCCQWGEKGSPPPGEPKLSHSGSQRPEQTGLLMGSASGGAKHGSGGFGDEC. The disordered stretch occupies residues 580–628; it reads CQWGEKGSPPPGEPKLSHSGSQRPEQTGLLMGSASGGAKHGSGGFGDEC. S596, S598, S600, and S621 each carry phosphoserine. The span at 613–628 shows a compositional bias: gly residues; that stretch reads ASGGAKHGSGGFGDEC.

In terms of assembly, homodimer. Interacts with ITGA4:ITGB1. Interacts with spectrins SPTA1 and SPTB1. Post-translationally, epinephrine-stimulated phosphorylation of Ser-621 by PKA enhances adhesion to laminin. Ser-621 can also be phosphorylated by AKT1.

The protein localises to the cell membrane. Its function is as follows. Transmembrane glycoprotein that functions as both a receptor and an adhesion molecule playing a crucial role in cell adhesion, motility, migration and invasion. Extracellular domain enables binding to extracellular matrix proteins, such as laminin, integrin and other ligands while its intracellular domain interacts with cytoskeletal proteins like hemoglobin, facilitating cell signal transduction. Serves as a receptor for laminin alpha-5/LAMA5 to promote cell adhesion. Mechanistically, JAK2 induces BCAM phosphorylation and activates its adhesion to laminin by stimulating a Rap1/AKT signaling pathway in the absence of EPOR. This is Basal cell adhesion molecule (BCAM) from Bos taurus (Bovine).